We begin with the raw amino-acid sequence, 127 residues long: Peroxiredoxin-2 (127 aa).

The Thioredoxin domain maps to 1 to 125 (LFFYPLDFTF…ALRLVQGXQY (125 aa)). Catalysis depends on Cys-12, which acts as the Cysteine sulfenic acid (-SOH) intermediate. Ser-73 bears the Phosphoserine mark.

The protein belongs to the peroxiredoxin family. AhpC/Prx1 subfamily. As to quaternary structure, homodimer; disulfide-linked, upon oxidation. 5 homodimers assemble to form a ring-like decamer. Interacts with TIPIN. In terms of processing, the enzyme can be inactivated by further oxidation of the cysteine sulfenic acid (C(P)-SOH) to sulphinic acid (C(P)-SO2H) instead of its condensation to a disulfide bond. It can be reactivated by forming a transient disulfide bond with sulfiredoxin SRXN1, which reduces the cysteine sulfinic acid in an ATP- and Mg-dependent manner. Acetylation increases resistance to transition to high molecular-mass complexes. Deacetylated by HDAC6 which decreases reducing activity.

The protein localises to the cytoplasm. The enzyme catalyses a hydroperoxide + [thioredoxin]-dithiol = an alcohol + [thioredoxin]-disulfide + H2O. Functionally, thiol-specific peroxidase that catalyzes the reduction of hydrogen peroxide and organic hydroperoxides to water and alcohols, respectively. Plays a role in cell protection against oxidative stress by detoxifying peroxides and as sensor of hydrogen peroxide-mediated signaling events. Might participate in the signaling cascades of growth factors and tumor necrosis factor-alpha by regulating the intracellular concentrations of H(2)O(2). This Sus scrofa (Pig) protein is Peroxiredoxin-2 (PRDX2).